A 323-amino-acid polypeptide reads, in one-letter code: MFASDGNAATQWMPTGSVTVQVPGKINLYLAVGDCCDNGYHELVTVFHAVSLVDQVTVRNADVLSLGLVGEGANHVPTDEHNIAWRAAELMAEHVGRAPDVSIMIDKSIPVAGGMAGGSADAAAVLVAMNSLWELSLPRRDLCMLAAKLGSDVPFALHGGTALGTGRGEELATVLSRATFHWVLAFADSSLLTPAVYTEFDRLRDVGNPPRLAEPGPVLAALVAADPEQLAPLLGNELQAAAVSLDPALRCALRAGMEAGALAGIVSGSGPTCAFLCASATSAIDVGAQLAGAGVCRTVRVATGPVPGARVVHAPMSRGLNDM.

The active site involves K25. 110–120 contacts ATP; the sequence is PVAGGMAGGSA. Residue D152 is part of the active site.

Belongs to the GHMP kinase family. IspE subfamily.

The catalysed reaction is 4-CDP-2-C-methyl-D-erythritol + ATP = 4-CDP-2-C-methyl-D-erythritol 2-phosphate + ADP + H(+). Its pathway is isoprenoid biosynthesis; isopentenyl diphosphate biosynthesis via DXP pathway; isopentenyl diphosphate from 1-deoxy-D-xylulose 5-phosphate: step 3/6. Its function is as follows. Catalyzes the phosphorylation of the position 2 hydroxy group of 4-diphosphocytidyl-2C-methyl-D-erythritol. The sequence is that of 4-diphosphocytidyl-2-C-methyl-D-erythritol kinase from Mycobacterium leprae (strain Br4923).